The primary structure comprises 393 residues: Probable acetyl-CoA acyltransferase (393 aa).

Cys-88 serves as the catalytic Acyl-thioester intermediate. Active-site proton acceptor residues include His-349 and Cys-378.

Belongs to the thiolase-like superfamily. Thiolase family.

It is found in the cytoplasm. It carries out the reaction 2 acetyl-CoA = acetoacetyl-CoA + CoA. This chain is Probable acetyl-CoA acyltransferase, found in Staphylococcus aureus (strain MRSA252).